Here is a 108-residue protein sequence, read N- to C-terminus: UPF0060 membrane protein YnfA (108 aa).

Residues 1–5 (MIKTT) lie on the Periplasmic side of the membrane. The helical transmembrane segment at 6–26 (LLFFATALCEIIGCFLPWLWL) threads the bilayer. Residues 27–30 (KRNA) are Cytoplasmic-facing. Residues 31 to 51 (SIWLLLPAGISLALFVWLLTL) traverse the membrane as a helical segment. The Periplasmic portion of the chain corresponds to 52–60 (HPAASGRVY). The helical transmembrane segment at 61–81 (AAYGGVYVCTALMWLRVVDGV) threads the bilayer. Topologically, residues 82–84 (KLT) are cytoplasmic. A helical transmembrane segment spans residues 85 to 105 (LYDWTGPLIALCGMLIIVVGW). The Periplasmic portion of the chain corresponds to 106-108 (GRT).

It belongs to the UPF0060 family.

It is found in the cell inner membrane. The protein is UPF0060 membrane protein YnfA of Escherichia coli O157:H7.